Reading from the N-terminus, the 488-residue chain is Ribulose bisphosphate carboxylase large chain (488 aa).

Substrate is bound by residues asparagine 127 and threonine 177. Lysine 179 serves as the catalytic Proton acceptor. Lysine 181 serves as a coordination point for substrate. Mg(2+)-binding residues include lysine 205, aspartate 207, and glutamate 208. At lysine 205 the chain carries N6-carboxylysine. The active-site Proton acceptor is the histidine 297. Substrate contacts are provided by arginine 298, histidine 330, and serine 382.

The protein belongs to the RuBisCO large chain family. Type I subfamily. In terms of assembly, heterohexadecamer of 8 large chains and 8 small chains. Mg(2+) serves as cofactor.

It is found in the plastid. The protein resides in the chloroplast. It carries out the reaction 2 (2R)-3-phosphoglycerate + 2 H(+) = D-ribulose 1,5-bisphosphate + CO2 + H2O. The catalysed reaction is D-ribulose 1,5-bisphosphate + O2 = 2-phosphoglycolate + (2R)-3-phosphoglycerate + 2 H(+). In terms of biological role, ruBisCO catalyzes two reactions: the carboxylation of D-ribulose 1,5-bisphosphate, the primary event in carbon dioxide fixation, as well as the oxidative fragmentation of the pentose substrate in the photorespiration process. Both reactions occur simultaneously and in competition at the same active site. This Pyropia yezoensis (Susabi-nori) protein is Ribulose bisphosphate carboxylase large chain.